A 329-amino-acid polypeptide reads, in one-letter code: Sorting assembly machinery 35 kDa subunit (329 aa).

As to quaternary structure, component of the mitochondrial outer membrane sorting assembly machinery (SAM or TOB) complex, which at least consists of SAM35, SAM37 and SAM50.

It is found in the mitochondrion outer membrane. Functionally, essential component of the mitochondrial outer membrane sorting assembly machinery (SAM or TOB) complex, which is required for the sorting of proteins with complicated topology, such as beta-barrel proteins, to the mitochondrial outer membrane after import by the TOM complex. The polypeptide is Sorting assembly machinery 35 kDa subunit (SAM35) (Saccharomyces cerevisiae (strain ATCC 204508 / S288c) (Baker's yeast)).